The sequence spans 225 residues: NAD(P)H-quinone oxidoreductase subunit K, chloroplastic (225 aa).

[4Fe-4S] cluster-binding residues include Cys43, Cys44, Cys108, and Cys139.

It belongs to the complex I 20 kDa subunit family. As to quaternary structure, NDH is composed of at least 16 different subunits, 5 of which are encoded in the nucleus. [4Fe-4S] cluster serves as cofactor.

The protein localises to the plastid. It localises to the chloroplast thylakoid membrane. It catalyses the reaction a plastoquinone + NADH + (n+1) H(+)(in) = a plastoquinol + NAD(+) + n H(+)(out). It carries out the reaction a plastoquinone + NADPH + (n+1) H(+)(in) = a plastoquinol + NADP(+) + n H(+)(out). Functionally, NDH shuttles electrons from NAD(P)H:plastoquinone, via FMN and iron-sulfur (Fe-S) centers, to quinones in the photosynthetic chain and possibly in a chloroplast respiratory chain. The immediate electron acceptor for the enzyme in this species is believed to be plastoquinone. Couples the redox reaction to proton translocation, and thus conserves the redox energy in a proton gradient. The chain is NAD(P)H-quinone oxidoreductase subunit K, chloroplastic from Arabis hirsuta (Hairy rock-cress).